We begin with the raw amino-acid sequence, 369 residues long: Cell division protein FtsZ (369 aa).

GTP-binding positions include 27–31 (GAGNN), 119–121 (GTG), glutamate 150, and asparagine 189.

It belongs to the FtsZ family. Homodimer. Polymerizes to form a dynamic ring structure in a strictly GTP-dependent manner. Interacts directly with several other division proteins.

The protein resides in the cytoplasm. Functionally, essential cell division protein that forms a contractile ring structure (Z ring) at the future cell division site. The regulation of the ring assembly controls the timing and the location of cell division. One of the functions of the FtsZ ring is to recruit other cell division proteins to the septum to produce a new cell wall between the dividing cells. Binds GTP and shows GTPase activity. This chain is Cell division protein FtsZ, found in Mycoplasma genitalium (strain ATCC 33530 / DSM 19775 / NCTC 10195 / G37) (Mycoplasmoides genitalium).